The chain runs to 284 residues: Bifunctional protein FolD (284 aa).

NADP(+) is bound by residues 166–168 (GAS) and isoleucine 232.

Belongs to the tetrahydrofolate dehydrogenase/cyclohydrolase family. As to quaternary structure, homodimer.

The enzyme catalyses (6R)-5,10-methylene-5,6,7,8-tetrahydrofolate + NADP(+) = (6R)-5,10-methenyltetrahydrofolate + NADPH. It carries out the reaction (6R)-5,10-methenyltetrahydrofolate + H2O = (6R)-10-formyltetrahydrofolate + H(+). It functions in the pathway one-carbon metabolism; tetrahydrofolate interconversion. In terms of biological role, catalyzes the oxidation of 5,10-methylenetetrahydrofolate to 5,10-methenyltetrahydrofolate and then the hydrolysis of 5,10-methenyltetrahydrofolate to 10-formyltetrahydrofolate. The protein is Bifunctional protein FolD of Stutzerimonas stutzeri (strain A1501) (Pseudomonas stutzeri).